Reading from the N-terminus, the 260-residue chain is NH(3)-dependent NAD(+) synthetase (260 aa).

31–38 contributes to the ATP binding site; it reads GLSGGLDS. Residue Asp-37 participates in Mg(2+) binding. A deamido-NAD(+)-binding site is contributed by Arg-112. An ATP-binding site is contributed by Thr-132. Residue Glu-137 coordinates Mg(2+). The ATP site is built by Lys-161 and Ser-183.

The protein belongs to the NAD synthetase family. In terms of assembly, homodimer.

It carries out the reaction deamido-NAD(+) + NH4(+) + ATP = AMP + diphosphate + NAD(+) + H(+). It functions in the pathway cofactor biosynthesis; NAD(+) biosynthesis; NAD(+) from deamido-NAD(+) (ammonia route): step 1/1. Functionally, catalyzes the ATP-dependent amidation of deamido-NAD to form NAD. Uses ammonia as a nitrogen source. The protein is NH(3)-dependent NAD(+) synthetase of Helicobacter pylori (strain J99 / ATCC 700824) (Campylobacter pylori J99).